A 921-amino-acid polypeptide reads, in one-letter code: Protein translocase subunit SecA (921 aa).

ATP is bound by residues Q86, 104-108 (GEGKT), and D512. The Zn(2+) site is built by C905, C907, C916, and H917.

Belongs to the SecA family. In terms of assembly, monomer and homodimer. Part of the essential Sec protein translocation apparatus which comprises SecA, SecYEG and auxiliary proteins SecDF-YajC and YidC. Requires Zn(2+) as cofactor.

Its subcellular location is the cell inner membrane. It is found in the cytoplasm. The enzyme catalyses ATP + H2O + cellular proteinSide 1 = ADP + phosphate + cellular proteinSide 2.. Its function is as follows. Part of the Sec protein translocase complex. Interacts with the SecYEG preprotein conducting channel. Has a central role in coupling the hydrolysis of ATP to the transfer of proteins into and across the cell membrane, serving both as a receptor for the preprotein-SecB complex and as an ATP-driven molecular motor driving the stepwise translocation of polypeptide chains across the membrane. The chain is Protein translocase subunit SecA from Caulobacter sp. (strain K31).